We begin with the raw amino-acid sequence, 161 residues long: Protein-export protein SecB (161 aa).

The protein belongs to the SecB family. Homotetramer, a dimer of dimers. One homotetramer interacts with 1 SecA dimer.

The protein resides in the cytoplasm. One of the proteins required for the normal export of preproteins out of the cell cytoplasm. It is a molecular chaperone that binds to a subset of precursor proteins, maintaining them in a translocation-competent state. It also specifically binds to its receptor SecA. The protein is Protein-export protein SecB of Afipia carboxidovorans (strain ATCC 49405 / DSM 1227 / KCTC 32145 / OM5) (Oligotropha carboxidovorans).